Reading from the N-terminus, the 766-residue chain is Protein transport protein Sec23B (766 aa).

Ala-2 carries the post-translational modification N-acetylalanine. Zn(2+) contacts are provided by Cys-61, Cys-66, Cys-85, and Cys-88. Residue Lys-564 is modified to N6-acetyllysine. One copy of the Gelsolin-like repeat lies at 633 to 719 (PEPVLLDSSS…EHGGSQARFL (87 aa)).

It belongs to the SEC23/SEC24 family. SEC23 subfamily. COPII is composed of at least five proteins: the Sec23/24 complex, the Sec13/31 complex and Sar1. Interacts with SAR1A.

The protein localises to the cytoplasmic vesicle. It is found in the COPII-coated vesicle membrane. It localises to the endoplasmic reticulum membrane. Its subcellular location is the cytoplasm. The protein resides in the cytosol. Functionally, component of the coat protein complex II (COPII) which promotes the formation of transport vesicles from the endoplasmic reticulum (ER). The coat has two main functions, the physical deformation of the endoplasmic reticulum membrane into vesicles and the selection of cargo molecules for their transport to the Golgi complex. In Pongo abelii (Sumatran orangutan), this protein is Protein transport protein Sec23B.